We begin with the raw amino-acid sequence, 606 residues long: Medium-chain acyl-CoA ligase ACSF2, mitochondrial (606 aa).

The N-terminal 13 residues, 1–13, are a transit peptide targeting the mitochondrion; sequence MSSKILLTNLRTS. ATP contacts are provided by residues 256–264, D484, R499, and K590; that span reads TSGTTGKPK.

Belongs to the ATP-dependent AMP-binding enzyme family.

Its subcellular location is the mitochondrion. The enzyme catalyses a medium-chain fatty acid + ATP + CoA = a medium-chain fatty acyl-CoA + AMP + diphosphate. The catalysed reaction is octanoate + ATP + CoA = octanoyl-CoA + AMP + diphosphate. Functionally, acyl-CoA synthases catalyze the initial reaction in fatty acid metabolism, by forming a thioester with CoA. Has some preference toward medium-chain substrates. Plays a role in adipocyte differentiation. This chain is Medium-chain acyl-CoA ligase ACSF2, mitochondrial, found in Danio rerio (Zebrafish).